Consider the following 368-residue polypeptide: Cobalt-precorrin-5B C(1)-methyltransferase (368 aa).

Belongs to the CbiD family.

It carries out the reaction Co-precorrin-5B + S-adenosyl-L-methionine = Co-precorrin-6A + S-adenosyl-L-homocysteine. The protein operates within cofactor biosynthesis; adenosylcobalamin biosynthesis; cob(II)yrinate a,c-diamide from sirohydrochlorin (anaerobic route): step 6/10. Catalyzes the methylation of C-1 in cobalt-precorrin-5B to form cobalt-precorrin-6A. This chain is Cobalt-precorrin-5B C(1)-methyltransferase, found in Brucella anthropi (strain ATCC 49188 / DSM 6882 / CCUG 24695 / JCM 21032 / LMG 3331 / NBRC 15819 / NCTC 12168 / Alc 37) (Ochrobactrum anthropi).